Reading from the N-terminus, the 644-residue chain is Zinc finger protein 568 (644 aa).

Residues 48–119 (VTFKDVAVDL…EEEMFGRHCP (72 aa)) enclose the KRAB domain. 15 consecutive C2H2-type zinc fingers follow at residues 222-244 (FKCNQCGQDFSHKFDLIRHERIH), 250-272 (YECKECGKAFSRKENLITHQKIH), 278-300 (YKCNECGKAFIQMSNLIRHHRIH), 306-328 (YACKDCWKAFSQKSNLIEHERIH), 334-356 (YECKECGKSFSQKQNLIEHEKIH), 362-384 (YACNECGRAFSRMSSVTLHMRSH), 390-412 (YKCNKCGKAFSQCSVFIIHMRSH), 418-440 (YVCSECGKAFSQSSSLTVHMRNH), 446-468 (YECKECGKAFSRKENLITHQKIH), 474-496 (YECSECGKAFIQMSNLIRHQRIH), 502-524 (YACTVCGKAFSQKSNLTEHEKIH), 530-552 (YHCNQCGKAFSQRQNLLEHEKIH), 558-580 (FKCNECGKAFSRISSLTLHVRSH), 586-608 (YECNKCGKAFSQCSLLIIHMRSH), and 614-636 (FECNECGKAFSQRASLSIHKRGH).

The protein belongs to the krueppel C2H2-type zinc-finger protein family. As to quaternary structure, interacts with TRIM28.

The protein localises to the nucleus. Functionally, has transcriptional repression activity, partially through the recruitment of the corepressor TRIM28 but also has repression activity independently of this interaction. Essential during embryonic development, where it acts as a direct repressor of a placental-specific transcript of IGF2 in early development and regulates convergent extension movements required for axis elongation and tissue morphogenesis in all germ layers. Also important for normal morphogenesis of extraembryonic tissues including the yolk sac, extraembryonic mesoderm and placenta. May enhance proliferation or maintenance of neural stem cells. The chain is Zinc finger protein 568 (ZNF568) from Homo sapiens (Human).